The chain runs to 615 residues: Delta-like protein B (615 aa).

The signal sequence occupies residues 1 to 20 (MAHLSLYCLLSVSLLQLVAS). Residues 21–522 (SGVFELKVHS…VGQTSPSAVA (502 aa)) lie on the Extracellular side of the membrane. In terms of domain architecture, DSL spans 159-203 (VFCDEFYFGEACSDYCRPRDDTLGHYTCDENGNKECLVGWQGDYC). 26 disulfides stabilise this stretch: cysteine 161/cysteine 170, cysteine 174/cysteine 186, cysteine 194/cysteine 203, cysteine 208/cysteine 219, cysteine 212/cysteine 225, cysteine 227/cysteine 236, cysteine 245/cysteine 250, cysteine 258/cysteine 267, cysteine 274/cysteine 286, cysteine 280/cysteine 296, cysteine 298/cysteine 307, cysteine 314/cysteine 325, cysteine 319/cysteine 334, cysteine 336/cysteine 345, cysteine 352/cysteine 363, cysteine 357/cysteine 373, cysteine 375/cysteine 384, cysteine 391/cysteine 402, cysteine 396/cysteine 411, cysteine 413/cysteine 422, cysteine 429/cysteine 440, cysteine 434/cysteine 449, cysteine 451/cysteine 460, cysteine 467/cysteine 478, cysteine 472/cysteine 487, and cysteine 489/cysteine 498. EGF-like domains are found at residues 204 to 237 (SDPICSSDCSERHGYCESPGECKCRLGWQGPSCS), 241 to 268 (HYPGCLHGTCSQPWQCVCKEGWGGLFCN), and 270 to 308 (DLNYCTNHKPCANGATCTNTGQGSYTCTCRPGFGGTNCE). Residues 310–346 (EINECDCNPCKNGGSCNDLENDYSCTCPQGFYGKNCE) form the EGF-like 4; calcium-binding domain. 2 consecutive EGF-like domains span residues 348–385 (IAMTCADDPCFNGGTCEEKFTGGYVCRCPPTFTGSNCE) and 387–423 (RLDRCSHKPCANGGECVDLGASALCRCRPGFSGSRCE). Residues 425-461 (NIDDCARYPCQNAGTCQDGINDYTCTCTLGFTGKNCS) enclose the EGF-like 7; calcium-binding domain. Asparagine 459 carries an N-linked (GlcNAc...) asparagine glycan. Residues 463–499 (RADACLTNPCLHGGTCFTHFSGPVCQCVPGFMGSTCE) enclose the EGF-like 8 domain. The helical transmembrane segment at 523–543 (VSCVLGVLAVFLGVCVGLVVL) threads the bilayer. The Cytoplasmic segment spans residues 544–615 (RRRRHRLRRQ…FLWSAGGGLR (72 aa)).

Ubiquitinated by mib, leading to its endocytosis and subsequent degradation.

Its subcellular location is the membrane. Functionally, acts as a ligand for Notch receptors and is involved in primary neurogenesis. Can activate Notch receptors, thereby playing a key role in lateral inhibition, a process that prevents the immediate neighbors of each nascent neural cell from simultaneously embarking on neural differentiation. The protein is Delta-like protein B (dlb) of Danio rerio (Zebrafish).